A 293-amino-acid polypeptide reads, in one-letter code: Chorion protein S36 (293 aa).

An N-terminal signal peptide occupies residues 1–20; the sequence is MQLGLWFGLFAVAAAPLVSA. Over residues 235 to 253 the composition is skewed to polar residues; the sequence is QSYGQPQAYNQPQAYSQPQ. The interval 235–293 is disordered; that stretch reads QSYGQPQAYNQPQAYSQPQSYGNSGSSGAGNSGPSSDSYAAGAETPLYASPAPYGSPSY.

It belongs to the chorion protein S36 family.

The protein localises to the secreted. Chorion membrane (egg shell) protein; protects the egg from the environment. The protein is Chorion protein S36 (Cp36) of Drosophila virilis (Fruit fly).